We begin with the raw amino-acid sequence, 605 residues long: Aspartate--tRNA(Asp/Asn) ligase (605 aa).

Glutamate 186 provides a ligand contact to L-aspartate. Positions glutamine 210–lysine 213 are aspartate. Residues arginine 232 and histidine 460 each coordinate L-aspartate. Arginine 232–glutamate 234 is an ATP binding site. Position 494 (glutamate 494) interacts with ATP. An L-aspartate-binding site is contributed by arginine 501. Glycine 546–arginine 549 is a binding site for ATP.

Belongs to the class-II aminoacyl-tRNA synthetase family. Type 1 subfamily. As to quaternary structure, homodimer.

It localises to the cytoplasm. It catalyses the reaction tRNA(Asx) + L-aspartate + ATP = L-aspartyl-tRNA(Asx) + AMP + diphosphate. Functionally, aspartyl-tRNA synthetase with relaxed tRNA specificity since it is able to aspartylate not only its cognate tRNA(Asp) but also tRNA(Asn). Reaction proceeds in two steps: L-aspartate is first activated by ATP to form Asp-AMP and then transferred to the acceptor end of tRNA(Asp/Asn). The protein is Aspartate--tRNA(Asp/Asn) ligase of Chlorobium chlorochromatii (strain CaD3).